Here is an 848-residue protein sequence, read N- to C-terminus: MTRYTPAEIEARWQKAWRENEVFKAIRSADKPKYYVLEMFPYPSGRIHMGHVRNYTMGDVIARYKLATGHNVLHPMGWDAFGMPAENAAMAIGGHPKDWTYGNIKDMRDQMKPLGLSIDWSREFATCDPEYYGQQQALFLDFLEAGLVYRKNAIVNWDPVDMTVLANEQVEQGRGWRSGALVERRELTQWFFKISDHSEELLSALDTLENWPAKVRLMQENWIGKSRGLQFAFSTIDGPDGHDRIEVYTTRPDTLLGASFVGISPDHPLAKLLERDNDNVAAFCAECRKGGTTEEAIETAEKLGFDTGLRVRHPFDTAAELPVYIANFILMDYGTGAIFGCPAHDQRDFEFATKYDLPIISTFLPSQDADEVLSEAFVPAKTEKVFYNRGFAGAEFQTGLEAIDAAIDFCESNGIGQGVTKYRLRDWGLSRQRYWGCPIPVVHCDDCGVVPEKKENLPIELPYDVSFDTPGNPLNRHPTWRDTPCPACGKPAQRETDTMDTFVDSSWYFARFTAPRAETPTVMEDAQYWMNVDQYIGGIEHAILHLLYSRFFARAMQMTGHLPQSAIEPFDALFTQGMVTHEIYQTRDANGRPVYHLPEDVTDGRLADGTEVEIIPSAKMSKSKKNVVDPLGIIASYGADTARWFVLSDSPPERDVEWTASGAEAAFKHLTRVWTLSERIGKMDKDAAGQGDEDLLRAMHVCIHDVTMGIESFGFNAAIAKLYAFTAKLQKSKAGYGAQRTAIMTLAQLMSPMTPHLAEDIWAHQGGDGLVTTAPWPRADEAMLVSDTVTLPVQINGKRRAEIVISADLSKEEVEKIALADPAVIRSLNGATPKKIIVVPGRIVNVVV.

Positions 41–51 (PYPSGRIHMGH) match the 'HIGH' region motif. The 'KMSKS' region motif lies at 619–623 (KMSKS). Lysine 622 serves as a coordination point for ATP.

The protein belongs to the class-I aminoacyl-tRNA synthetase family.

Its subcellular location is the cytoplasm. The catalysed reaction is tRNA(Leu) + L-leucine + ATP = L-leucyl-tRNA(Leu) + AMP + diphosphate. This chain is Leucine--tRNA ligase, found in Roseobacter denitrificans (strain ATCC 33942 / OCh 114) (Erythrobacter sp. (strain OCh 114)).